We begin with the raw amino-acid sequence, 245 residues long: Acetoacetate decarboxylase (245 aa).

Lys116 (schiff-base intermediate with acetoacetate) is an active-site residue.

Belongs to the ADC family.

It catalyses the reaction acetoacetate + H(+) = acetone + CO2. Functionally, catalyzes the conversion of acetoacetate to acetone and carbon dioxide. The sequence is that of Acetoacetate decarboxylase from Acidiphilium cryptum (strain JF-5).